The primary structure comprises 860 residues: M-phase phosphoprotein 8 (860 aa).

Met1 is modified (N-acetylmethionine). A phosphoserine mark is found at Ser51, Ser85, Ser136, and Ser138. The Chromo domain occupies 59 to 118 (FEVEKILDMKTEGGKVLYKVRWKGYTSDDDTWEPEIHLEDCKEVLLEFRKKIAENKAKAV). Positions 80 to 87 (WKGYTSDD) are histone H3K9me3 binding. Residues 129–141 (NDIFEANSDSDQQ) are compositionally biased toward polar residues. Residues 129 to 191 (NDIFEANSDS…SKPDLESSLE (63 aa)) form a disordered region. Thr144 is subject to Phosphothreonine. Phosphoserine; by CDK1 is present on residues Ser149 and Ser164. Composition is skewed to basic and acidic residues over residues 159 to 169 (QREEKSPDDLK) and 177 to 186 (KLKDKSKPDL). Residues Ser188, Ser189, and Ser192 each carry the phosphoserine modification. Positions 206-249 (AKEELKESKKPKKDEVKETKELKKVKKGEIRDLKTKTREDPKEN) are enriched in basic and acidic residues. Residues 206–440 (AKEELKESKK…GRKEPKGLKT (235 aa)) form a disordered region. The segment covering 259-268 (ESQVESESSV) has biased composition (low complexity). Phosphoserine occurs at positions 266, 272, and 279. The segment covering 280-314 (EGLHSDSREEKQNTKSARERAGQDMGLEHGFEKPL) has biased composition (basic and acidic residues). At Ser319 the chain carries Phosphoserine. Thr334 carries the phosphothreonine; by CDK1 modification. A compositionally biased stretch (basic and acidic residues) spans 336–377 (RKAEDTRENRKLENKNAFLEKKTVPKKQRNQDRSKSAAELEK). The residue at position 385 (Thr385) is a Phosphothreonine; by CDK1. 3 positions are modified to phosphoserine: Ser392, Ser400, and Ser403. Over residues 408–440 (KETKRNESKEKYQKRHDSDKEEKGRKEPKGLKT) the composition is skewed to basic and acidic residues. Positions 431 to 560 (GRKEPKGLKT…HLDGKDENFA (130 aa)) are interaction with humanin. Phosphothreonine is present on Thr454. Positions 458–496 (KNDVSENNRKREEIPLDFKTIDDHKTKENKQSLKERRNT) are disordered. ANK repeat units follow at residues 600 to 629 (SGMT…KVNG), 633 to 662 (NGTT…FVNV), 666 to 695 (NGET…DCNI), and 699 to 728 (HQNS…TLSR).

As to quaternary structure, homodimer. Interacts (via chromo domain) with histone H3K9me3. Has the highest affinity for H3K9me3, and lesser affinity for H3K9me2 and H3K9me1. Component of the HUSH complex; at least composed of TASOR, PPHLN1 and MPHOSPH8. Interacts with DNMT3, EHMT1 and SETDB1. Interacts with MORC2; the interaction associateS MORC2 with the HUSH complex which recruits MORC2 to heterochromatic loci. Interacts with ZNF638; leading to recruitment of the HUSH complex to unintegrated retroviral DNA. Interacts with TASOR. Interacts with humanin. Post-translationally, phosphorylated in M (mitotic) phase. Phosphorylation by CDK1 promotes dissociation from chromatin.

The protein localises to the nucleus. The protein resides in the chromosome. In terms of biological role, heterochromatin component that specifically recognizes and binds methylated 'Lys-9' of histone H3 (H3K9me) and promotes recruitment of proteins that mediate epigenetic repression. Mediates recruitment of the HUSH complex to H3K9me3 sites: the HUSH complex is recruited to genomic loci rich in H3K9me3 and is required to maintain transcriptional silencing by promoting recruitment of SETDB1, a histone methyltransferase that mediates further deposition of H3K9me3, as well as MORC2. Binds H3K9me and promotes DNA methylation by recruiting DNMT3A to target CpG sites; these can be situated within the coding region of the gene. Mediates down-regulation of CDH1 expression. Also represses L1 retrotransposons in collaboration with MORC2 and, probably, SETDB1, the silencing is dependent of repressive epigenetic modifications, such as H3K9me3 mark. Silencing events often occur within introns of transcriptionally active genes, and lead to the down-regulation of host gene expression. The HUSH complex is also involved in the silencing of unintegrated retroviral DNA by being recruited by ZNF638: some part of the retroviral DNA formed immediately after infection remains unintegrated in the host genome and is transcriptionally repressed. In Homo sapiens (Human), this protein is M-phase phosphoprotein 8.